We begin with the raw amino-acid sequence, 223 residues long: MTSEVIEDEKQFYSKAKTYWKQIPPTVDGMLGGYGHISSIDINSSRKFLQRFLREGPNKTGTSCALDCGAGIGRITKRLLLPLFREVDMVDITEDFLVQAKTYLGEEGKRVRNYFCCGLQDFTPEPDSYDVIWIQWVIGHLTDQHLAEFLRRCKGSLRPNGIIVIKDNMAQEGVILDDVDSSVCRDLDVVRRIICSAGLSLLAEERQENLPDEIYHVYSFALR.

An N-acetylmethionine modification is found at methionine 1. Threonine 2 carries the N-acetylthreonine; in N-terminal Xaa-Pro-Lys N-methyltransferase 1, N-terminally processed modification. Residues glycine 69, arginine 74, 91 to 93 (DIT), 119 to 120 (LQ), and glutamine 135 each bind S-adenosyl-L-methionine.

Belongs to the methyltransferase superfamily. NTM1 family.

The protein localises to the nucleus. It catalyses the reaction N-terminal L-alanyl-L-prolyl-L-lysyl-[protein] + 3 S-adenosyl-L-methionine = N-terminal N,N,N-trimethyl-L-alanyl-L-prolyl-L-lysyl-[protein] + 3 S-adenosyl-L-homocysteine + 3 H(+). The enzyme catalyses N-terminal L-seryl-L-prolyl-L-lysyl-[protein] + 3 S-adenosyl-L-methionine = N-terminal N,N,N-trimethyl-L-seryl-L-prolyl-L-lysyl-[protein] + 3 S-adenosyl-L-homocysteine + 3 H(+). The catalysed reaction is N-terminal L-prolyl-L-prolyl-L-lysyl-[protein] + 2 S-adenosyl-L-methionine = N-terminal N,N-dimethyl-L-prolyl-L-prolyl-L-lysyl-[protein] + 2 S-adenosyl-L-homocysteine + 2 H(+). In terms of biological role, distributive alpha-N-methyltransferase that methylates the N-terminus of target proteins containing the N-terminal motif [Ala/Gly/Pro/Ser]-Pro-Lys when the initiator Met is cleaved. Specifically catalyzes mono-, di- or tri-methylation of the exposed alpha-amino group of the Ala, Gly or Ser residue in the [Ala/Gly/Ser]-Pro-Lys motif and mono- or di-methylation of Pro in the Pro-Pro-Lys motif. Some of the substrates may be primed by NTMT2-mediated monomethylation. Catalyzes the trimethylation of the N-terminal Gly in CENPA (after removal of Met-1). Responsible for the N-terminal methylation of KLHL31, MYL2, MYL3, RB1, RCC1, RPL23A and SET. Required during mitosis for normal bipolar spindle formation and chromosome segregation via its action on RCC1. In Homo sapiens (Human), this protein is N-terminal Xaa-Pro-Lys N-methyltransferase 1 (NTMT1).